A 504-amino-acid polypeptide reads, in one-letter code: Ribosomal protein uS12 methylthiotransferase RimO (504 aa).

The MTTase N-terminal domain occupies 19–135 (KKVGFVSLGC…ILAASGIEPR (117 aa)). 6 residues coordinate [4Fe-4S] cluster: Cys-28, Cys-64, Cys-98, Cys-214, Cys-218, and Cys-221. Positions 200 to 430 (ATPKYMAYIK…MSLQKQISKK (231 aa)) constitute a Radical SAM core domain. Positions 433–504 (KALIGREFDV…HDYDLVARLL (72 aa)) constitute a TRAM domain.

The protein belongs to the methylthiotransferase family. RimO subfamily. [4Fe-4S] cluster is required as a cofactor.

The protein localises to the cytoplasm. The catalysed reaction is L-aspartate(89)-[ribosomal protein uS12]-hydrogen + (sulfur carrier)-SH + AH2 + 2 S-adenosyl-L-methionine = 3-methylsulfanyl-L-aspartate(89)-[ribosomal protein uS12]-hydrogen + (sulfur carrier)-H + 5'-deoxyadenosine + L-methionine + A + S-adenosyl-L-homocysteine + 2 H(+). Its function is as follows. Catalyzes the methylthiolation of an aspartic acid residue of ribosomal protein uS12. In Koribacter versatilis (strain Ellin345), this protein is Ribosomal protein uS12 methylthiotransferase RimO.